We begin with the raw amino-acid sequence, 309 residues long: Serine/threonine-protein phosphatase 2A catalytic subunit beta isoform (309 aa).

Asp-57, His-59, Asp-85, and Asn-117 together coordinate Mn(2+). The Proton donor role is filled by His-118. Mn(2+) contacts are provided by His-167 and His-241. Tyr-307 is modified (phosphotyrosine). Position 309 is a leucine methyl ester (Leu-309).

The protein belongs to the PPP phosphatase family. PP-1 subfamily. As to quaternary structure, found in a complex with at least ARL2, PPP2CB, PPP2R1A, PPP2R2A, PPP2R5E and TBCD. Interacts with TBCD. PP2A consists of a common heterodimeric core enzyme (composed of a 36 kDa catalytic subunit (subunit C) and a 65 kDa constant regulatory subunit (PR65) (subunit A)) that associates with a variety of regulatory subunits. Proteins that associate with the core dimer include three families of regulatory subunits B (the R2/B/PR55/B55, R3/B''/PR72/PR130/PR59 and R5/B'/B56 families), the 48 kDa variable regulatory subunit, viral proteins, and cell signaling molecules. Binds PPME1. May indirectly interact with SGO1, most probably through regulatory B56 subunits. Interacts with CTTNBP2NL. Interacts with PTPA. Part of the core of STRIPAK complexes composed of PP2A catalytic and scaffolding subunits, the striatins (PP2A regulatory subunits), the striatin-associated proteins MOB4, STRIP1 and STRIP2, PDCD10 and members of the STE20 kinases, such as STK24 and STK26. It depends on Mn(2+) as a cofactor. Post-translationally, reversibly methyl esterified on Leu-309 by leucine carboxyl methyltransferase 1 (Lcmt1) and protein phosphatase methylesterase 1 (PPME1). Carboxyl methylation influences the affinity of the catalytic subunit for the different regulatory subunits, thereby modulating the PP2A holoenzyme's substrate specificity, enzyme activity and cellular localization. In terms of processing, phosphorylation of either threonine (by autophosphorylation-activated protein kinase) or tyrosine results in inactivation of the phosphatase. Auto-dephosphorylation has been suggested as a mechanism for reactivation. May be monoubiquitinated by NOSIP.

The protein localises to the cytoplasm. It is found in the nucleus. It localises to the chromosome. Its subcellular location is the centromere. The protein resides in the cytoskeleton. The protein localises to the spindle pole. It carries out the reaction O-phospho-L-seryl-[protein] + H2O = L-seryl-[protein] + phosphate. The enzyme catalyses O-phospho-L-threonyl-[protein] + H2O = L-threonyl-[protein] + phosphate. In terms of biological role, catalytic subunit of protein phosphatase 2A (PP2A), a serine/threonine phosphatase involved in the regulation of a wide variety of enzymes, signal transduction pathways, and cellular events. PP2A can modulate the activity of phosphorylase B kinase, casein kinase 2, mitogen-stimulated S6 kinase, and MAP-2 kinase. Part of the striatin-interacting phosphatase and kinase (STRIPAK) complexes. STRIPAK complexes have critical roles in protein (de)phosphorylation and are regulators of multiple signaling pathways including Hippo, MAPK, nuclear receptor and cytoskeleton remodeling. Different types of STRIPAK complexes are involved in a variety of biological processes such as cell growth, differentiation, apoptosis, metabolism and immune regulation. This Oryctolagus cuniculus (Rabbit) protein is Serine/threonine-protein phosphatase 2A catalytic subunit beta isoform (PPP2CB).